A 199-amino-acid chain; its full sequence is Transcriptional regulatory protein EntR (199 aa).

In terms of domain architecture, Response regulatory spans 3–124 (KILVIDRCHF…TLSHTIQEAL (122 aa)). Asp-8 is subject to 4-aspartylphosphate. One can recognise an HTH luxR-type domain in the interval 133-198 (PKNATPLLTP…SPFLSLPGKG (66 aa)). The H-T-H motif DNA-binding region spans 157–176 (NNAIAAALSIHGKTVYTYKR).

May serve to repress the entericidin locus in C.freundii. The chain is Transcriptional regulatory protein EntR (ecnR) from Citrobacter freundii.